We begin with the raw amino-acid sequence, 133 residues long: Transmembrane protein 60 (133 aa).

Transmembrane regions (helical) follow at residues 5–25 (LAQR…MLVL), 35–55 (WFLI…LLIV), 78–98 (AWYL…CAKL), and 110–130 (FIPL…NVFF).

The protein resides in the membrane. In Homo sapiens (Human), this protein is Transmembrane protein 60 (TMEM60).